Consider the following 991-residue polypeptide: Receptor-like protein kinase HAIKU2 (991 aa).

Residues 1 to 19 (MLRLLFIVRLLFLMPLASS) form the signal peptide. Residues 20-616 (RSNHSEEVEN…KRKHLSKVDM (597 aa)) lie on the Extracellular side of the membrane. Asparagine 22 is a glycosylation site (N-linked (GlcNAc...) asparagine). LRR repeat units follow at residues 66 to 90 (DGNV…RFTD), 99 to 123 (LKLL…LGKC), 125 to 148 (RLRY…SLQL), 150 to 170 (EFLS…SLKD), 171 to 196 (LKRL…ILNL), 197 to 220 (TALQ…IKNL), 221 to 244 (VRLQ…IVQL), 246 to 267 (NLRQ…GFRN), 269 to 291 (TNLR…LRFL), 292 to 314 (KNLV…EFGD), 315 to 339 (FKSL…LGSW), 341 to 363 (AFKY…MCKK), 365 to 387 (VMTH…YAKC), 388 to 411 (KTLI…IWGL), 413 to 435 (NLQF…IGNA), 436 to 459 (KSLG…ISGA), 461 to 482 (SLVS…SFGK), 483 to 508 (LKEL…GLCT), 510 to 531 (LVDL…LGSL), 532 to 554 (KLLN…GLSA), and 555 to 578 (LKLS…LVSG). N-linked (GlcNAc...) asparagine glycans are attached at residues asparagine 109, asparagine 135, asparagine 155, asparagine 195, and asparagine 206. 2 N-linked (GlcNAc...) asparagine glycosylation sites follow: asparagine 267 and asparagine 278. 2 N-linked (GlcNAc...) asparagine glycosylation sites follow: asparagine 397 and asparagine 427. Asparagine 495 is a glycosylation site (N-linked (GlcNAc...) asparagine). Residue asparagine 538 is glycosylated (N-linked (GlcNAc...) asparagine). Residues 617-637 (CFIVAAILALFFLFSYVIFKI) traverse the membrane as a helical segment. Residues 638 to 991 (RRDKLNKTVQ…SANDEITKVV (354 aa)) are Cytoplasmic-facing. Residues 671 to 970 (IKSENIIGRG…SMLEKIEPSY (300 aa)) form the Protein kinase domain. ATP-binding positions include 677-685 (IGRGGQGNV) and lysine 699. A phosphotyrosine mark is found at tyrosine 762 and tyrosine 801. The Proton acceptor role is filled by aspartate 814. Phosphotyrosine is present on residues tyrosine 859 and tyrosine 866. Position 867 is a phosphothreonine (threonine 867). The segment at 972 to 991 (KNSGEASYGESANDEITKVV) is disordered.

The protein belongs to the protein kinase superfamily. Ser/Thr protein kinase family. In terms of tissue distribution, expressed in the endosperm of fertilized ovules.

The protein localises to the membrane. The catalysed reaction is L-seryl-[protein] + ATP = O-phospho-L-seryl-[protein] + ADP + H(+). It catalyses the reaction L-threonyl-[protein] + ATP = O-phospho-L-threonyl-[protein] + ADP + H(+). Modulates the seed size by negatively regulating the cellularization of syncytial endosperm. This Arabidopsis thaliana (Mouse-ear cress) protein is Receptor-like protein kinase HAIKU2 (IKU2).